The following is a 319-amino-acid chain: Cytochrome f (319 aa).

An N-terminal signal peptide occupies residues 1-35 (MQNKDACKSLSSWVSLSISLLVLTVPLIWPYNSTA). 4 residues coordinate heme: Phe-36, Cys-56, Cys-59, and His-60. Residues 285-305 (IQGLLVFFASVILAQIFLVLK) form a helical membrane-spanning segment.

The protein belongs to the cytochrome f family. In terms of assembly, the 4 large subunits of the cytochrome b6-f complex are cytochrome b6, subunit IV (17 kDa polypeptide, petD), cytochrome f and the Rieske protein, while the 4 small subunits are PetG, PetL, PetM and PetN. The complex functions as a dimer. It depends on heme as a cofactor.

It is found in the plastid. It localises to the chloroplast thylakoid membrane. Functionally, component of the cytochrome b6-f complex, which mediates electron transfer between photosystem II (PSII) and photosystem I (PSI), cyclic electron flow around PSI, and state transitions. This chain is Cytochrome f, found in Staurastrum punctulatum (Green alga).